Here is a 924-residue protein sequence, read N- to C-terminus: Translation initiation factor IF-2 (924 aa).

The segment at 118-325 (PSTAHREELA…QAPVVGGVRL (208 aa)) is disordered. Pro residues-rich tracts occupy residues 150–173 (APHP…PGGR) and 192–201 (IPRPPAPRPS). The span at 202–212 (ASPSSMSPRPG) shows a compositional bias: low complexity. Gly residues predominate over residues 229–295 (RPGGGRPGAP…GAAGAFGRPG (67 aa)). The segment covering 299–308 (RRGRKSKRQK) has biased composition (basic residues). The tr-type G domain maps to 420–591 (VRPPVVTVMG…AVLLTADAAL (172 aa)). Residues 429–436 (GHVDHGKT) form a G1 region. 429–436 (GHVDHGKT) serves as a coordination point for GTP. A G2 region spans residues 454–458 (GITQH). Positions 479 to 482 (DTPG) are G3. Residues 479–483 (DTPGH) and 533–536 (NKID) contribute to the GTP site. The interval 533 to 536 (NKID) is G4. The interval 569-571 (SAK) is G5.

This sequence belongs to the TRAFAC class translation factor GTPase superfamily. Classic translation factor GTPase family. IF-2 subfamily.

The protein resides in the cytoplasm. In terms of biological role, one of the essential components for the initiation of protein synthesis. Protects formylmethionyl-tRNA from spontaneous hydrolysis and promotes its binding to the 30S ribosomal subunits. Also involved in the hydrolysis of GTP during the formation of the 70S ribosomal complex. The sequence is that of Translation initiation factor IF-2 from Mycobacterium leprae (strain Br4923).